The following is an 814-amino-acid chain: ATP-dependent 6-phosphofructokinase 1 (814 aa).

An N-terminal catalytic PFK domain 1 region spans residues 1 to 420 (MDADASTITP…NLETYKLLTK (420 aa)). Residues glycine 55, 118 to 119 (RS), and 148 to 151 (GDGS) contribute to the ATP site. Residue aspartate 149 participates in Mg(2+) binding. Residues 194–196 (SID), arginine 231, 238–240 (MGR), glutamate 294, arginine 322, and 328–331 (HVQR) contribute to the substrate site. The active-site Proton acceptor is the aspartate 196. The interval 421-435 (MRTVEKDNLSEGHKF) is interdomain linker. Residues 436 to 814 (NVAVINVGAP…EEESADSHMF (379 aa)) are C-terminal regulatory PFK domain 2. Residues lysine 505, 563-567 (TISNN), arginine 601, 608-610 (MGG), glutamate 664, arginine 690, 696-699 (HVQQ), and arginine 771 each bind beta-D-fructose 2,6-bisphosphate.

This sequence belongs to the phosphofructokinase type A (PFKA) family. ATP-dependent PFK group I subfamily. Eukaryotic two domain clade 'E' sub-subfamily. As to quaternary structure, homotetramer. The cofactor is Mg(2+).

Its subcellular location is the cytoplasm. The enzyme catalyses beta-D-fructose 6-phosphate + ATP = beta-D-fructose 1,6-bisphosphate + ADP + H(+). Its pathway is carbohydrate degradation; glycolysis; D-glyceraldehyde 3-phosphate and glycerone phosphate from D-glucose: step 3/4. Allosterically activated by ADP, AMP, or fructose 2,6-bisphosphate, and allosterically inhibited by ATP or citrate. Catalyzes the phosphorylation of D-fructose 6-phosphate to fructose 1,6-bisphosphate by ATP, the first committing step of glycolysis. The chain is ATP-dependent 6-phosphofructokinase 1 from Caenorhabditis elegans.